A 375-amino-acid polypeptide reads, in one-letter code: MSETAVSIDSDRSKSEEEDEEEYSPPVQSSPSANFEKDRHLMYLEMMYELLPYHYQSQEINRLTLAHFIISGLHFLGARDRVDKDVVAKWVLSFQAFPTNRVSLKDGEFYGFFGSRSSQFPIDENGDLKHNGSHLASTYCALAILKVIGHDLSTIDSKSLLISMINLQQDDGSFMPIHIGGETDLRFVYCAAAICYMLDSWSGMDKESAKNYILNCQSYDGGFGLIPGSESHGGATYCAIASLRLMGYIGVDLLSNDSSSSIIDPSLLLNWCLQRQANDGGFQGRTNKPSDTCYAFWIGAVLKLIGGDALIDKMALRKFLMSCQSKYGGFSKFPGQLPDLYHSYYGYTAFSLLEEQGLSPLCPELGLPLLAAPGI.

A disordered region spans residues 1-33 (MSETAVSIDSDRSKSEEEDEEEYSPPVQSSPSA). Ser2 bears the N-acetylserine mark. PFTB repeat units follow at residues 157–199 (SKSL…YMLD), 206–247 (KESA…RLMG), 265–306 (PSLL…KLIG), and 313–354 (KMAL…SLLE). Geranylgeranyl diphosphate-binding positions include 232 to 234 (HGG) and 285 to 288 (RTNK). Zn(2+)-binding residues include Asp291 and Cys293. 294–297 (YAFW) contacts geranylgeranyl diphosphate. His342 serves as a coordination point for Zn(2+).

Belongs to the protein prenyltransferase subunit beta family. As to quaternary structure, heterodimer of an alpha and a beta subunit. It depends on Zn(2+) as a cofactor. Mg(2+) serves as cofactor. As to expression, expressed in roots, leaves, stems, flowers and siliques.

The catalysed reaction is geranylgeranyl diphosphate + L-cysteinyl-[protein] = S-geranylgeranyl-L-cysteinyl-[protein] + diphosphate. Its function is as follows. Catalyzes the transfer of a geranyl-geranyl moiety from geranyl-geranyl pyrophosphate to a cysteine at the fourth position from the C-terminus of proteins having the C-terminal sequence Cys-aliphatic-aliphatic-X (CaaX). Seems to exclusively prenylate CaaX substrates with leucine in the terminal position. The beta subunit is responsible for peptide-binding. May negatively regulate abscisic acid (ABA) signaling in guard cells and auxin-induced lateral root initiation. Negatively regulates ABA signaling in guard cells. in negative regulation of auxin-induced lateral root initiation. This chain is Geranylgeranyl transferase type-1 subunit beta (GGB), found in Arabidopsis thaliana (Mouse-ear cress).